Reading from the N-terminus, the 248-residue chain is Probable uridine-cytidine kinase (248 aa).

15 to 23 contacts ATP; it reads GGTSCGKST. Residues Asp73, Tyr101, Arg154, Arg164, and Gln172 each contribute to the substrate site. Asp201 lines the ATP pocket. The interval 224-248 is disordered; that stretch reads SDEEEEKENELVKQGSFRRPFSRPH.

It belongs to the uridine kinase family.

It carries out the reaction uridine + ATP = UMP + ADP + H(+). It catalyses the reaction cytidine + ATP = CMP + ADP + H(+). It functions in the pathway pyrimidine metabolism; CTP biosynthesis via salvage pathway; CTP from cytidine: step 1/3. It participates in pyrimidine metabolism; UMP biosynthesis via salvage pathway; UMP from uridine: step 1/1. This is Probable uridine-cytidine kinase from Caenorhabditis elegans.